Consider the following 231-residue polypeptide: 7-cyano-7-deazaguanine synthase (231 aa).

Residue 8–18 (FSGGQDSTTCL) participates in ATP binding. Cys188, Cys197, Cys200, and Cys203 together coordinate Zn(2+).

This sequence belongs to the QueC family. Zn(2+) is required as a cofactor.

It catalyses the reaction 7-carboxy-7-deazaguanine + NH4(+) + ATP = 7-cyano-7-deazaguanine + ADP + phosphate + H2O + H(+). The protein operates within purine metabolism; 7-cyano-7-deazaguanine biosynthesis. Its function is as follows. Catalyzes the ATP-dependent conversion of 7-carboxy-7-deazaguanine (CDG) to 7-cyano-7-deazaguanine (preQ(0)). In Salmonella arizonae (strain ATCC BAA-731 / CDC346-86 / RSK2980), this protein is 7-cyano-7-deazaguanine synthase.